The sequence spans 235 residues: ATP phosphoribosyltransferase (235 aa).

Belongs to the ATP phosphoribosyltransferase family. Short subfamily. Heteromultimer composed of HisG and HisZ subunits.

It localises to the cytoplasm. It carries out the reaction 1-(5-phospho-beta-D-ribosyl)-ATP + diphosphate = 5-phospho-alpha-D-ribose 1-diphosphate + ATP. Its pathway is amino-acid biosynthesis; L-histidine biosynthesis; L-histidine from 5-phospho-alpha-D-ribose 1-diphosphate: step 1/9. Functionally, catalyzes the condensation of ATP and 5-phosphoribose 1-diphosphate to form N'-(5'-phosphoribosyl)-ATP (PR-ATP). Has a crucial role in the pathway because the rate of histidine biosynthesis seems to be controlled primarily by regulation of HisG enzymatic activity. In Synechococcus sp. (strain JA-2-3B'a(2-13)) (Cyanobacteria bacterium Yellowstone B-Prime), this protein is ATP phosphoribosyltransferase.